The primary structure comprises 145 residues: RNA polymerase-binding transcription factor DksA (145 aa).

Positions 108, 111, 129, and 132 each coordinate Zn(2+). Residues 108–132 (CDCCGEEIGIRRLEARPTADLCIDC) form a dksA C4-type zinc finger.

Belongs to the DksA family. Interacts directly with the RNA polymerase.

It is found in the cytoplasm. Transcription factor that acts by binding directly to the RNA polymerase (RNAP). Required for negative regulation of rRNA expression and positive regulation of several amino acid biosynthesis promoters. Also required for regulation of fis expression. This Haemophilus influenzae (strain ATCC 51907 / DSM 11121 / KW20 / Rd) protein is RNA polymerase-binding transcription factor DksA.